The primary structure comprises 735 residues: 5-methyltetrahydropteroyltriglutamate--homocysteine methyltransferase (735 aa).

Residues 15-18 (REFK) and Lys104 contribute to the 5-methyltetrahydropteroyltri-L-glutamate site. L-homocysteine is bound by residues 409–411 (IGS) and Glu462. L-methionine-binding positions include 409 to 411 (IGS) and Glu462. 5-methyltetrahydropteroyltri-L-glutamate contacts are provided by residues 493 to 494 (RC) and Trp539. Residue Asp577 coordinates L-homocysteine. Asp577 contacts L-methionine. Glu583 contacts 5-methyltetrahydropteroyltri-L-glutamate. Zn(2+) is bound by residues His618, Cys620, and Glu642. The active-site Proton donor is His672. Cys704 is a Zn(2+) binding site.

The protein belongs to the vitamin-B12 independent methionine synthase family. Requires Zn(2+) as cofactor.

It catalyses the reaction 5-methyltetrahydropteroyltri-L-glutamate + L-homocysteine = tetrahydropteroyltri-L-glutamate + L-methionine. Its pathway is amino-acid biosynthesis; L-methionine biosynthesis via de novo pathway; L-methionine from L-homocysteine (MetE route): step 1/1. Catalyzes the transfer of a methyl group from 5-methyltetrahydrofolate to homocysteine resulting in methionine formation. This Thermotoga petrophila (strain ATCC BAA-488 / DSM 13995 / JCM 10881 / RKU-1) protein is 5-methyltetrahydropteroyltriglutamate--homocysteine methyltransferase.